A 200-amino-acid chain; its full sequence is NAD(P)H dehydrogenase (quinone) (200 aa).

Residues 4-191 form the Flavodoxin-like domain; it reads VLVLYYSSYG…DIARYQGKHV (188 aa). Residues 10–15 and 79–81 contribute to the FMN site; these read SSYGHV and TRF. Tyrosine 12 contributes to the NAD(+) binding site. Residue tryptophan 99 coordinates substrate. Residues 114 to 120 and histidine 135 each bind FMN; that span reads STGTQHG.

It belongs to the WrbA family. FMN serves as cofactor.

The enzyme catalyses a quinone + NADH + H(+) = a quinol + NAD(+). It catalyses the reaction a quinone + NADPH + H(+) = a quinol + NADP(+). The chain is NAD(P)H dehydrogenase (quinone) from Burkholderia multivorans (strain ATCC 17616 / 249).